We begin with the raw amino-acid sequence, 905 residues long: Microtubule-associated protein 10 (905 aa).

7 disordered regions span residues 30–51 (AAAVEQEEEEEEKEQGEASSPR), 199–235 (TRTGGGAEVSPQTQQERQQLQQPASQPSPKEADKPLG), 329–362 (APEEMDDASPEKKRVNPPAHRSCLKHPSSAAHEH), 434–458 (SPESSAKSTCRSEAKKDKRSVGGCE), 547–586 (SSAEQSQKPQLPEDKYLDSDASFTENSDTSRQISGVFDEP), 721–772 (RSFK…GSPV), and 786–855 (KSLE…SSYL). The segment covering 34–43 (EQEEEEEEKE) has biased composition (acidic residues). The segment covering 208-227 (SPQTQQERQQLQQPASQPSP) has biased composition (low complexity). A compositionally biased stretch (basic and acidic residues) spans 443–453 (CRSEAKKDKRS). A compositionally biased stretch (polar residues) spans 567-579 (ASFTENSDTSRQI). The segment covering 721–736 (RSFKAHDSSSRTENPK) has biased composition (basic and acidic residues). Residues 737-748 (HSQYTSKSSDTG) show a composition bias toward polar residues. The segment covering 790–801 (EASSISASDLSS) has biased composition (low complexity). The span at 830 to 855 (SVKTRSSWKSLEKSQSPQTSQVSSYL) shows a compositional bias: polar residues.

As to quaternary structure, interacts (via middle region) with microtubules. In terms of tissue distribution, expressed in different cell lines (at protein level).

The protein localises to the cytoplasm. Its subcellular location is the cytoskeleton. The protein resides in the spindle pole. It is found in the microtubule organizing center. It localises to the centrosome. The protein localises to the midbody. Microtubule-associated protein (MAP) that plays a role in the regulation of cell division; promotes microtubule stability and participates in the organization of the spindle midzone and normal progress of cytokinesis. In Homo sapiens (Human), this protein is Microtubule-associated protein 10 (MAP10).